Here is a 185-residue protein sequence, read N- to C-terminus: HTH-type transcriptional repressor OpcR (185 aa).

Positions 49 to 73 form a DNA-binding region, H-T-H motif; it reads LSELSEATGMSKTRMSQVVREMIDA.

Belongs to the GbsR family.

With respect to regulation, is not choline-responsive. Its function is as follows. Negatively regulates the transcription of the opuC operon. In the absence of GbsR, is also a negative regulator of the opuB operon. Binds to an inverted repeat in the promoter region of the operons. The polypeptide is HTH-type transcriptional repressor OpcR (opcR) (Bacillus subtilis (strain 168)).